A 203-amino-acid chain; its full sequence is Short chain dehydrogenase/reductase dpmpH (203 aa).

NADP(+) is bound by residues D23, Y77, and K81. Residue Y77 is the Proton acceptor of the active site. The active-site Lowers pKa of active site Tyr is K81.

This sequence belongs to the short-chain dehydrogenases/reductases (SDR) family.

It functions in the pathway secondary metabolite biosynthesis; terpenoid biosynthesis. Short chain dehydrogenase/reductase; part of the gene cluster that mediates the biosynthesis of diterpenoid pyrones. The first step of the pathway is the synthesis of the alpha-pyrone moiety by the polyketide synthase dpmpA via condensation of one acetyl-CoA starter unit with 3 malonyl-CoA units and 2 methylations. The alpha-pyrone is then combined with geranylgeranyl pyrophosphate (GGPP) formed by the GGPP synthase dpmpD through the action of the prenyltransferase dpmpC to yield a linear alpha-pyrone diterpenoid. Subsequent steps in the diterpenoid pyrone biosynthetic pathway involve the decalin core formation, which is initiated by the epoxidation of the C10-C11 olefin by the FAD-dependent oxidoreductase dpmpE, and is followed by a cyclization cascade catalyzed by the terpene cyclase dpmpB. The short chain dehydrogenase/reductase dpmpG then oxidizes the 8S hydroxy group to a ketone and the short chain dehydrogenase/reductase dpmpH reduces the ketone to the 8R hydroxy group to yield higginsianin B. Higginsianin B is further methylated by the methyltransferase dpmpI to produce the intermediate named FDDP B. The cytochrome P450 monooxygenase dpmpJ then oxidizes the C-26 methyl to primary alcohol, producing the final diterpenoid pyrone with a C-26 primary alcohol on the gamma-pyrone moiety named FDDP C. The sequence is that of Short chain dehydrogenase/reductase dpmpH from Macrophomina phaseolina (strain MS6) (Charcoal rot fungus).